Here is a 619-residue protein sequence, read N- to C-terminus: Translation initiation factor eIF2B subunit delta (619 aa).

Residues 21 to 32 show a composition bias toward basic and acidic residues; sequence GDYLDSKQEGKP. A disordered region spans residues 21-251; the sequence is GDYLDSKQEG…PKQRGKITKK (231 aa). The span at 42–56 shows a compositional bias: low complexity; sequence TNTSPVSIPTIISPP. Polar residues predominate over residues 57-84; sequence LGSNNSNYGKSPKSSYDNKQTSPLLSAS. The span at 85–98 shows a compositional bias: low complexity; it reads NNRKNNNNNNNNNN. A compositionally biased stretch (polar residues) spans 99–125; the sequence is ATSPKDSSIIGKNNVNSDLSKVSSSLN. Positions 136–199 are enriched in low complexity; that stretch reads STSSTPTSTP…KQQSKQQATQ (64 aa). Positions 200-244 are enriched in basic and acidic residues; that stretch reads QDKKDKEQQQQQQDKQDKESNEIKGSKEVAKDGQHGVKQFDDPKQ.

The protein belongs to the eIF-2B alpha/beta/delta subunits family. Component of the translation initiation factor 2B (eIF2B) complex which is a heterodecamer of two sets of five different subunits: alpha, beta, gamma, delta and epsilon. Subunits alpha, beta and delta comprise a regulatory subcomplex and subunits epsilon and gamma comprise a catalytic subcomplex. Within the complex, the hexameric regulatory complex resides at the center, with the two heterodimeric catalytic subcomplexes bound on opposite sides.

It localises to the cytoplasm. The protein resides in the cytosol. Acts as a component of the translation initiation factor 2B (eIF2B) complex, which catalyzes the exchange of GDP for GTP on eukaryotic initiation factor 2 (eIF2) gamma subunit. Its guanine nucleotide exchange factor activity is repressed when bound to eIF2 complex phosphorylated on the alpha subunit, thereby limiting the amount of methionyl-initiator methionine tRNA available to the ribosome and consequently global translation is repressed. This Dictyostelium discoideum (Social amoeba) protein is Translation initiation factor eIF2B subunit delta (eif2b4).